The following is a 399-amino-acid chain: Methylthioribose kinase (399 aa).

ATP is bound by residues Asn-40, Lys-57, and 111–113 (EDL). Residue Asp-229 participates in substrate binding. Position 246–248 (246–248 (DAE)) interacts with ATP. Arg-344 serves as a coordination point for substrate.

The protein belongs to the methylthioribose kinase family. In terms of assembly, homodimer.

It carries out the reaction 5-(methylsulfanyl)-D-ribose + ATP = 5-(methylsulfanyl)-alpha-D-ribose 1-phosphate + ADP + H(+). Its pathway is amino-acid biosynthesis; L-methionine biosynthesis via salvage pathway; S-methyl-5-thio-alpha-D-ribose 1-phosphate from S-methyl-5'-thioadenosine (hydrolase route): step 2/2. In terms of biological role, catalyzes the phosphorylation of methylthioribose into methylthioribose-1-phosphate. This Erwinia tasmaniensis (strain DSM 17950 / CFBP 7177 / CIP 109463 / NCPPB 4357 / Et1/99) protein is Methylthioribose kinase.